Here is a 153-residue protein sequence, read N- to C-terminus: Small ribosomal subunit protein uS13 (153 aa).

The interval 129–153 is disordered; sequence RGQRTKSTFRHGSSVGVSRTRPTGN. A compositionally biased stretch (polar residues) spans 143–153; that stretch reads VGVSRTRPTGN.

Belongs to the universal ribosomal protein uS13 family. In terms of assembly, part of the 30S ribosomal subunit. Forms a loose heterodimer with protein S19. Forms two bridges to the 50S subunit in the 70S ribosome.

Functionally, located at the top of the head of the 30S subunit, it contacts several helices of the 16S rRNA. In the 70S ribosome it contacts the 23S rRNA (bridge B1a) and protein L5 of the 50S subunit (bridge B1b), connecting the 2 subunits; these bridges are implicated in subunit movement. This Methanosphaera stadtmanae (strain ATCC 43021 / DSM 3091 / JCM 11832 / MCB-3) protein is Small ribosomal subunit protein uS13.